Consider the following 431-residue polypeptide: Fumarylacetoacetase fahA (431 aa).

D133 provides a ligand contact to Ca(2+). Position 135 (Y135) interacts with substrate. H140 serves as the catalytic Proton acceptor. Residue R149 coordinates substrate. Residues E209, E211, and D243 each contribute to the Ca(2+) site. D243 serves as a coordination point for Mg(2+). Substrate-binding residues include Q250 and Y254. K263 and T267 together coordinate Mg(2+). Residue T362 participates in substrate binding. The span at 362 to 381 shows a compositional bias: polar residues; the sequence is TISGKENQTQGSLLEQTNGK. Residues 362–382 are disordered; it reads TISGKENQTQGSLLEQTNGKN.

The protein belongs to the FAH family. It depends on Ca(2+) as a cofactor. Mg(2+) serves as cofactor.

It carries out the reaction 4-fumarylacetoacetate + H2O = acetoacetate + fumarate + H(+). It functions in the pathway amino-acid degradation; L-phenylalanine degradation; acetoacetate and fumarate from L-phenylalanine: step 6/6. In terms of biological role, fumarylacetoacetase; part of the L-tyrosine degradation gene cluster that mediates the biosynthesis of the brownish pigment pyomelanin as an alternative melanin. The 4-hydroxyphenylpyruvate dioxygenase hppD catalyzes the conversion of 4-hydroxyphenylpyruvate to homogentisic acid (HGA). The protein hmgX is crucial for this conversion and thus, probably functions as an accessory factor to mediate specific activity of hppD. The homogentisate 1,2-dioxygenase hmgA is then involved in the cleavage of the aromatic ring of HGA and its conversion to 4-maleylacetoacetate. When hmgA activity is lowered by the cell wall integrity (CWI) signaling pathway, HGA accumulates and leads to the production of pyomelanin through benzoquinone acetic acid after oxidation and polymerization. On the opposite, in non-stress conditions, both hppD and hmgA activities are balanced and HGA is degraded into 4-maleylacetoacetate. 4-maleylacetoacetate is further converted to 4-fumarylacetoacetate by the maleylacetoacetate isomerase maiA, which is degraded into fumarate and acetoacetate by the fumarylacetoacetase fahA. The protein is Fumarylacetoacetase fahA of Aspergillus fumigatus (strain ATCC MYA-4609 / CBS 101355 / FGSC A1100 / Af293) (Neosartorya fumigata).